The primary structure comprises 291 residues: 33 kDa chaperonin (291 aa).

Disulfide bonds link Cys229–Cys231 and Cys262–Cys265.

It belongs to the HSP33 family. Post-translationally, under oxidizing conditions two disulfide bonds are formed involving the reactive cysteines. Under reducing conditions zinc is bound to the reactive cysteines and the protein is inactive.

It localises to the cytoplasm. Redox regulated molecular chaperone. Protects both thermally unfolding and oxidatively damaged proteins from irreversible aggregation. Plays an important role in the bacterial defense system toward oxidative stress. This is 33 kDa chaperonin from Aliivibrio salmonicida (strain LFI1238) (Vibrio salmonicida (strain LFI1238)).